The chain runs to 924 residues: Protein translocase subunit SecA (924 aa).

ATP-binding positions include Gln87, 105–109 (GEGKT), and Asp517. The interval 886–906 (VPAADRDPNDPSTWGKVGRNE) is disordered. Zn(2+)-binding residues include Cys908, Cys910, Cys919, and His920.

It belongs to the SecA family. In terms of assembly, monomer and homodimer. Part of the essential Sec protein translocation apparatus which comprises SecA, SecYEG and auxiliary proteins SecDF-YajC and YidC. Requires Zn(2+) as cofactor.

The protein localises to the cell inner membrane. It is found in the cytoplasm. It carries out the reaction ATP + H2O + cellular proteinSide 1 = ADP + phosphate + cellular proteinSide 2.. In terms of biological role, part of the Sec protein translocase complex. Interacts with the SecYEG preprotein conducting channel. Has a central role in coupling the hydrolysis of ATP to the transfer of proteins into and across the cell membrane, serving both as a receptor for the preprotein-SecB complex and as an ATP-driven molecular motor driving the stepwise translocation of polypeptide chains across the membrane. This Azorhizobium caulinodans (strain ATCC 43989 / DSM 5975 / JCM 20966 / LMG 6465 / NBRC 14845 / NCIMB 13405 / ORS 571) protein is Protein translocase subunit SecA.